The chain runs to 445 residues: Maltoporin (445 aa).

A signal peptide spans 1–24 (MITLRKLPLAVAVAAGVMSAQAMA).

Belongs to the porin LamB (TC 1.B.3) family. As to quaternary structure, homotrimer formed of three 18-stranded antiparallel beta-barrels, containing three independent channels.

Its subcellular location is the cell outer membrane. The catalysed reaction is beta-maltose(in) = beta-maltose(out). Its function is as follows. Involved in the transport of maltose and maltodextrins. This Shigella flexneri protein is Maltoporin.